A 216-amino-acid chain; its full sequence is Probable GTP-binding protein EngB (216 aa).

Residues 27 to 201 enclose the EngB-type G domain; sequence EGIEVAFAGR…SQKLNTWFNE (175 aa). GTP is bound by residues 35–42, 62–66, 80–83, 147–150, and 180–182; these read GRSNAGKS, GRTQL, DLPG, TKAD, and FSS. Mg(2+) contacts are provided by S42 and T64.

The protein belongs to the TRAFAC class TrmE-Era-EngA-EngB-Septin-like GTPase superfamily. EngB GTPase family. Mg(2+) serves as cofactor.

In terms of biological role, necessary for normal cell division and for the maintenance of normal septation. The protein is Probable GTP-binding protein EngB of Serratia proteamaculans (strain 568).